We begin with the raw amino-acid sequence, 184 residues long: GTP cyclohydrolase 1 (184 aa).

The Zn(2+) site is built by cysteine 75, histidine 78, and cysteine 146.

Belongs to the GTP cyclohydrolase I family. In terms of assembly, homomer.

The enzyme catalyses GTP + H2O = 7,8-dihydroneopterin 3'-triphosphate + formate + H(+). It functions in the pathway cofactor biosynthesis; 7,8-dihydroneopterin triphosphate biosynthesis; 7,8-dihydroneopterin triphosphate from GTP: step 1/1. This is GTP cyclohydrolase 1 from Streptococcus pneumoniae (strain ATCC 700669 / Spain 23F-1).